We begin with the raw amino-acid sequence, 659 residues long: Protein phosphatase Slingshot homolog 3 (659 aa).

A compositionally biased stretch (polar residues) spans 1–16; sequence MALVTVSRSPPGSGAS. A disordered region spans residues 1-31; the sequence is MALVTVSRSPPGSGASTPVGPWDQAVQRRSR. N-acetylalanine is present on alanine 2. 2 positions are modified to phosphoserine: serine 9 and serine 37. The tract at residues 46–96 is disordered; sequence LGLQDGGDNDDAAEASSEPTEKAPSEEELHGDQTDFGQGSQSPQKQEEQRQ. Residues 64–78 show a composition bias toward basic and acidic residues; it reads PTEKAPSEEELHGDQ. Residues 80–89 are compositionally biased toward polar residues; the sequence is DFGQGSQSPQ. 2 positions are modified to phosphoserine: serine 85 and serine 87. The DEK-C domain maps to 269-324; that stretch reads EQMEQAIRAELWKVLDVSDLESVTSKEIRQALELRLGLPLQQYRDFIDNQMLLLVA. A Tyrosine-protein phosphatase domain is found at 328–469; it reads RASRIFPHLY…LQIYQGILTA (142 aa). The Phosphocysteine intermediate role is filled by cysteine 413. Disordered regions lie at residues 482 to 534, 547 to 603, and 617 to 638; these read GVSP…RINL, SLEL…RQSV, and QAFQEQEQGQGQGQGEPCISST. Low complexity predominate over residues 547–557; sequence SLELESTSETS.

Belongs to the protein-tyrosine phosphatase family. Does not bind to, or colocalize with, filamentous actin.

Its subcellular location is the cytoplasm. It is found in the cytoskeleton. The protein localises to the nucleus. The catalysed reaction is O-phospho-L-tyrosyl-[protein] + H2O = L-tyrosyl-[protein] + phosphate. It catalyses the reaction O-phospho-L-seryl-[protein] + H2O = L-seryl-[protein] + phosphate. The enzyme catalyses O-phospho-L-threonyl-[protein] + H2O = L-threonyl-[protein] + phosphate. In terms of biological role, protein phosphatase which may play a role in the regulation of actin filament dynamics. Can dephosphorylate and activate the actin binding/depolymerizing factor cofilin, which subsequently binds to actin filaments and stimulates their disassembly. The polypeptide is Protein phosphatase Slingshot homolog 3 (SSH3) (Homo sapiens (Human)).